Consider the following 200-residue polypeptide: dTTP/UTP pyrophosphatase (200 aa).

The Proton acceptor role is filled by Asp73.

The protein belongs to the Maf family. YhdE subfamily. A divalent metal cation is required as a cofactor.

The protein localises to the cytoplasm. The enzyme catalyses dTTP + H2O = dTMP + diphosphate + H(+). It carries out the reaction UTP + H2O = UMP + diphosphate + H(+). In terms of biological role, nucleoside triphosphate pyrophosphatase that hydrolyzes dTTP and UTP. May have a dual role in cell division arrest and in preventing the incorporation of modified nucleotides into cellular nucleic acids. This Chromohalobacter salexigens (strain ATCC BAA-138 / DSM 3043 / CIP 106854 / NCIMB 13768 / 1H11) protein is dTTP/UTP pyrophosphatase.